The following is a 425-amino-acid chain: UPF0597 protein KPN78578_43500 (425 aa).

This sequence belongs to the UPF0597 family.

This is UPF0597 protein KPN78578_43500 from Klebsiella pneumoniae subsp. pneumoniae (strain ATCC 700721 / MGH 78578).